We begin with the raw amino-acid sequence, 633 residues long: MPSCGACTCGAAAVRLITSSLASAQRGISGGRIHMSVLGRLGTFETQILQRAPLRSFTETPAYFASKDGISKDGSGDGNKKSASEGSSKKSGSGNSGKGGNQLRCPKCGDLCTHVETFVSSTRFVKCEKCHHFFVVLSEADSKKSIIKEPESAAEAVKLAFQQKPPPPPKKIYNYLDKYVVGQSFAKKVLSVAVYNHYKRIYNNIPANLRQQAEVEKQTSLTPRELEIRRREDEYRFTKLLQIAGISPHGNALGASMQQQVNQQIPQEKRGGEVLDSSHDDIKLEKSNILLLGPTGSGKTLLAQTLAKCLDVPFAICDCTTLTQAGYVGEDIESVIAKLLQDANYNVEKAQQGIVFLDEVDKIGSVPGIHQLRDVGGEGVQQGLLKLLEGTIVNVPEKNSRKLRGETVQVDTTNILFVASGAFNGLDRIISRRKNEKYLGFGTPSNLGKGRRAAAAADLANRSGESNTHQDIEEKDRLLRHVEARDLIEFGMIPEFVGRLPVVVPLHSLDEKTLVQILTEPRNAVIPQYQALFSMDKCELNVTEDALKAIARLALERKTGARGLRSIMEKLLLEPMFEVPNSDIVCVEVDKEVVEGKKEPGYIRAPTKESSEEEYDSGVEEEGWPRQADAANS.

A mitochondrion-targeting transit peptide spans 1-56 (MPSCGACTCGAAAVRLITSSLASAQRGISGGRIHMSVLGRLGTFETQILQRAPLRS). The segment at 68-100 (DGISKDGSGDGNKKSASEGSSKKSGSGNSGKGG) is disordered. The segment covering 69–83 (GISKDGSGDGNKKSA) has biased composition (basic and acidic residues). The segment covering 84 to 93 (SEGSSKKSGS) has biased composition (low complexity). The 54-residue stretch at 93-146 (SGNSGKGGNQLRCPKCGDLCTHVETFVSSTRFVKCEKCHHFFVVLSEADSKKSI) folds into the ClpX-type ZB domain. Zn(2+) is bound by residues cysteine 105, cysteine 108, cysteine 127, and cysteine 130. 294-301 (PTGSGKTL) is a binding site for ATP. At lysine 437 the chain carries N6-acetyllysine. Positions 598-610 (KEPGYIRAPTKES) are enriched in basic and acidic residues. Residues 598–633 (KEPGYIRAPTKESSEEEYDSGVEEEGWPRQADAANS) form a disordered region. A compositionally biased stretch (acidic residues) spans 611–622 (SEEEYDSGVEEE). The residue at position 617 (serine 617) is a Phosphoserine.

The protein belongs to the ClpX chaperone family. As to quaternary structure, homohexamer that forms a ring structure; this hexamerization requires ATP binding. Component of the ClpXP complex formed by the assembly of two CLPP heptameric rings with two CLPX hexameric rings, giving rise to a symmetrical structure with two central CLPP rings flanked by a CLPX ring at either end of the complex. Interacts with TFAM. As to expression, higher expression in skeletal muscle and heart and to a lesser extent in liver, brain, placenta, lung, kidney and pancreas.

It is found in the mitochondrion. The protein localises to the mitochondrion matrix. The protein resides in the mitochondrion nucleoid. It catalyses the reaction ATP + H2O = ADP + phosphate + H(+). ATP-dependent chaperone that functions as an unfoldase. As part of the ClpXP protease complex, it recognizes specific protein substrates, unfolds them using energy derived from ATP hydrolysis, and then translocates them to the proteolytic subunit (CLPP) of the ClpXP complex for degradation. Thanks to its chaperone activity, it also functions in the incorporation of the pyridoxal phosphate cofactor into 5-aminolevulinate synthase, thereby activating 5-aminolevulinate (ALA) synthesis, the first step in heme biosynthesis. This chaperone is also involved in the control of mtDNA nucleoid distribution, by regulating mitochondrial transcription factor A (TFAM) activity. This is ATP-dependent clpX-like chaperone, mitochondrial from Homo sapiens (Human).